The primary structure comprises 596 residues: Transketolase-like protein 1 (596 aa).

His-46 contributes to the substrate binding site. Residues Ser-49 and Gly-94–Leu-96 each bind thiamine diphosphate. Asp-126 is a Mg(2+) binding site. Residues Val-127 and Asn-156 each coordinate thiamine diphosphate. Asn-156 and Leu-158 together coordinate Mg(2+). Residues Lys-218 and His-232 each coordinate thiamine diphosphate. 3 residues coordinate substrate: His-232, Arg-292, and Ser-319. The thiamine diphosphate site is built by Glu-340 and Phe-366. Glu-340 acts as the Proton donor in catalysis. His-390 and Asp-398 together coordinate substrate. Gln-402 is a thiamine diphosphate binding site. A substrate-binding site is contributed by Arg-448.

It belongs to the transketolase family. Homodimer. Mg(2+) serves as cofactor. It depends on Ca(2+) as a cofactor. The cofactor is Mn(2+). Requires Co(2+) as cofactor. Thiamine diphosphate is required as a cofactor.

It is found in the cytoplasm. It carries out the reaction D-sedoheptulose 7-phosphate + D-glyceraldehyde 3-phosphate = aldehydo-D-ribose 5-phosphate + D-xylulose 5-phosphate. Its function is as follows. Catalyzes the transfer of a two-carbon ketol group from a ketose donor to an aldose acceptor, via a covalent intermediate with the cofactor thiamine pyrophosphate. The polypeptide is Transketolase-like protein 1 (TKTL1) (Bos taurus (Bovine)).